The primary structure comprises 677 residues: Mitochondrial 15S rRNA processing factor ppr3 (677 aa).

Residues 1–43 (MFTEICGKLRTCIYKKVAFSRPLGCNLRQLPVFRDFHNSVSCL) constitute a mitochondrion transit peptide. PPR repeat units follow at residues 210-244 (SVYL…QLKP), 245-279 (DNYT…KIEA), 280-314 (NTHV…SLQS), 317-351 (DDKT…PINP), 355-390 (SSRT…QWKP), and 569-604 (DIHV…SYLP).

This sequence belongs to the CCM1 family. In terms of assembly, binds to mitochondrial small subunit 15S rRNA.

It localises to the mitochondrion. In terms of biological role, regulates mitochondrial small subunit maturation by controlling 15S rRNA 5'-end processing. Localizes to the 5' precursor of the 15S rRNA in a position that is subsequently occupied by mS47 in the mature yeast mtSSU. Uses structure and sequence-specific RNA recognition, binding to a single-stranded region of the precursor and specifically recognizing bases -6 to -1. The exchange of Ccm1 for mS47 is coupled to the irreversible removal of precursor rRNA that is accompanied by conformational changes of the mitoribosomal proteins uS5m and mS26. These conformational changes signal completion of 5'-end rRNA processing through protection of the mature 5'-end of the 15S rRNA and stabilization of mS47. The removal of the 5' precursor together with the dissociation of Ccm1 may be catalyzed by the 5'-3' exoribonuclease Pet127. Involved in the specific removal of group I introns in mitochondrial encoded transcripts. In Schizosaccharomyces japonicus (strain yFS275 / FY16936) (Fission yeast), this protein is Mitochondrial 15S rRNA processing factor ppr3 (dmr1).